A 612-amino-acid chain; its full sequence is MIVDNSKDFDLKSFLANLTTHSGVYRMLDKHGEIIYVGKAKNLKNRVNSYFSKGAKDSKTLMMVEQIARIEITITPSDYEAYLLENNLIKQHRPKYNILFKDDKSYPYLVISRDKFPRVSFYRGKSAYKKGQCFGPYVSISSVKNTLNTIQKIFPIRQCENSYYKSRVRPCLQYQIKRCLAPCVGLVSQQQYDEQLAILKKFLAGKFSSVLEEISAKMYQASEDMEYEKAQVYRDQLVVLRKLQQQQIVDIQEDKTFDVIGIYMQDSYASIALLQIQNGDVVADRHWSIDAKGQDKTSIMHAFLSHFYLGDEIRNIWPKNIILSKVEFADITDLMNSISQKIGQAINWIIAPAADNLKWLKLAEVNARQKLNIYTSSKSQYQKRLESLKEFLELEKDIKRIECFDISHFQGEATIASCVVYTDDGEDRKSHRRYNIKGIKSGDDYAAIHQAVSRRVSSGLEADNLPDVMIIDGGKGQIHQAEAVFREYGIQDKVQLVSLGKGVERISGKEKIYKGFDDTEYTLDEHNPGFLLLRQVRDSAHDHAIKGQRKKVSANRQSSIIEEIEGVGSKRRKALLRYFGGWQELSRASVDEIAKVKGISKKLAQEIWECFH.

Residues 20 to 98 (THSGVYRMLD…IKQHRPKYNI (79 aa)) form the GIY-YIG domain. One can recognise a UVR domain in the interval 208–243 (SSVLEEISAKMYQASEDMEYEKAQVYRDQLVVLRKL).

The protein belongs to the UvrC family. As to quaternary structure, interacts with UvrB in an incision complex.

The protein localises to the cytoplasm. The UvrABC repair system catalyzes the recognition and processing of DNA lesions. UvrC both incises the 5' and 3' sides of the lesion. The N-terminal half is responsible for the 3' incision and the C-terminal half is responsible for the 5' incision. This is UvrABC system protein C from Francisella tularensis subsp. mediasiatica (strain FSC147).